A 256-amino-acid polypeptide reads, in one-letter code: Glycerol-3-phosphate acyltransferase (256 aa).

The next 6 helical transmembrane spans lie at 2-22, 58-78, 90-110, 123-143, 153-173, and 211-231; these read FPYL…SVLW, LAVA…AIGL, SYFI…WFKF, LIVV…IFAF, IIGT…GVMG, and FADG…ILVV.

The protein belongs to the PlsY family. As to quaternary structure, probably interacts with PlsX.

The protein localises to the cell membrane. The catalysed reaction is an acyl phosphate + sn-glycerol 3-phosphate = a 1-acyl-sn-glycero-3-phosphate + phosphate. The protein operates within lipid metabolism; phospholipid metabolism. Functionally, catalyzes the transfer of an acyl group from acyl-phosphate (acyl-PO(4)) to glycerol-3-phosphate (G3P) to form lysophosphatidic acid (LPA). This enzyme utilizes acyl-phosphate as fatty acyl donor, but not acyl-CoA or acyl-ACP. This is Glycerol-3-phosphate acyltransferase from Mesoplasma florum (strain ATCC 33453 / NBRC 100688 / NCTC 11704 / L1) (Acholeplasma florum).